Here is a 503-residue protein sequence, read N- to C-terminus: UPF0522 protein C (503 aa).

The signal sequence occupies residues 1 to 18 (MKLFILIILSICLALVNS). 3 N-linked (GlcNAc...) asparagine glycosylation sites follow: N330, N337, and N370.

The protein belongs to the UPF0522 family.

The protein resides in the secreted. This is UPF0522 protein C from Dictyostelium discoideum (Social amoeba).